The primary structure comprises 89 residues: Small ribosomal subunit protein uS14 (89 aa).

Residues C52, C55, C68, and C71 each coordinate Zn(2+).

This sequence belongs to the universal ribosomal protein uS14 family. Part of the 30S ribosomal subunit. Contacts proteins S3 and S10. Zn(2+) is required as a cofactor.

Functionally, binds 16S rRNA, required for the assembly of 30S particles and may also be responsible for determining the conformation of the 16S rRNA at the A site. This chain is Small ribosomal subunit protein uS14 (rpsN), found in Salinibacter ruber (strain DSM 13855 / M31).